The sequence spans 209 residues: Ribosomal RNA small subunit methyltransferase G (209 aa).

Residues G71, F76, 122–123 (AE), and R135 each bind S-adenosyl-L-methionine.

This sequence belongs to the methyltransferase superfamily. RNA methyltransferase RsmG family.

It localises to the cytoplasm. Its function is as follows. Specifically methylates the N7 position of a guanine in 16S rRNA. The protein is Ribosomal RNA small subunit methyltransferase G of Flavobacterium psychrophilum (strain ATCC 49511 / DSM 21280 / CIP 103535 / JIP02/86).